Here is a 412-residue protein sequence, read N- to C-terminus: Multidrug resistance protein MdtG (412 aa).

A run of 11 helical transmembrane segments spans residues 19–39 (LGCF…PLYV), 56–76 (LVFS…GGLA), 90–110 (LGMS…QFLL), 113–133 (ALLG…ATQI), 144–164 (TLST…GFLA), 171–191 (TVFF…LFLI), 222–242 (LFVT…ILTL), 254–274 (IAFI…MSAP), 288–308 (ILIV…FVQT), 317–337 (FLLG…LVYN), and 376–396 (AVFL…TLSL).

This sequence belongs to the major facilitator superfamily. DHA1 family. MdtG (TC 2.A.1.2.20) subfamily.

It localises to the cell inner membrane. The protein is Multidrug resistance protein MdtG of Klebsiella pneumoniae (strain 342).